Reading from the N-terminus, the 418-residue chain is Beta-arrestin-1 (418 aa).

The interval 1-163 (MGDKGTRVFK…LEEKIHKRNS (163 aa)) is interaction with SRC. Residues 45–86 (PEYLKERRVYVTLTCAFRYGREDLDVLGLTFRKDLFVANVQS) are interaction with CHRM2. The residue at position 47 (Y47) is a Phosphotyrosine. Residues K250, M255, K324, and K326 each coordinate 1D-myo-inositol hexakisphosphate. The interval 318–418 (IVSYKVKVKL…GTGSPQLNNR (101 aa)) is interaction with TRAF6. The segment at 353 to 375 (HPKPKEEPPHREVPENETPVDTN) is disordered. Basic and acidic residues predominate over residues 355-366 (KPKEEPPHREVP). The short motif at 385 to 395 (DIVFEDFARQR) is the [DE]-X(1,2)-F-X-X-[FL]-X-X-X-R motif element. Residues 397 to 418 (KGMKDDKEEEEDGTGSPQLNNR) form a disordered region. The residue at position 412 (S412) is a Phosphoserine; by GRK5.

The protein belongs to the arrestin family. As to quaternary structure, monomer. Homodimer. Homooligomer; the self-association is mediated by InsP6-binding. Heterooligomer with ARRB2; the association is mediated by InsP6-binding. Interacts with GPR143. Interacts with ADRB2 (phosphorylated). Interacts with CHRM2 (phosphorylated). Interacts with LHCGR. Interacts with CYTH2 and CASR. Interacts with AP2B1 (dephosphorylated at 'Tyr-737'); phosphorylation of AP2B1 at 'Tyr-737' disrupts the interaction. Interacts (dephosphorylated at Ser-412) with CLTC. Interacts with CCR2 and GRK2. Interacts with CRR5. Interacts with PTAFR (phosphorylated on serine residues). Interacts with CLTC and MAP2K3. Interacts with CREB1. Interacts with TRAF6. Interacts with IGF1R and MDM2. Interacts with C5AR1. Interacts with PDE4D. Interacts with SRC (via the SH3 domain and the protein kinase domain); the interaction is independent of the phosphorylation state of SRC C-terminus. Interacts with TACR1. Interacts with RAF1. Interacts with CHUK, IKBKB and MAP3K14. Interacts with DVL1; the interaction is enhanced by phosphorylation of DVL1. Interacts with DVL2; the interaction is enhanced by phosphorylation of DVL2. Interacts with IGF1R. Associates with MAP kinase p38. Part of a MAPK signaling complex consisting of TACR1, ARRB1, SRC, MAPK1 (activated) and MAPK3 (activated). Part of a MAPK signaling complex consisting of F2RL1, ARRB1, RAF1, MAPK1 (activated) and MAPK3 (activated). Interacts with MAP2K4/MKK4. Interacts with HCK and CXCR1 (phosphorylated). Interacts with ACKR3 and ACKR4. Interacts with ARRDC1; the interaction is direct. Interacts with GPR61, GPR62 and GPR135. In terms of processing, constitutively phosphorylated at Ser-412 in the cytoplasm. At the plasma membrane, is rapidly dephosphorylated, a process that is required for clathrin binding and ADRB2 endocytosis but not for ADRB2 binding and desensitization. Once internalized, is rephosphorylated. Post-translationally, the ubiquitination status appears to regulate the formation and trafficking of beta-arrestin-GPCR complexes and signaling. Ubiquitination appears to occur GPCR-specific. Ubiquitinated by MDM2; the ubiquitination is required for rapid internalization of ADRB2. Deubiquitinated by USP33; the deubiquitination leads to a dissociation of the beta-arrestin-GPCR complex. Stimulation of a class A GPCR, such as ADRB2, induces transient ubiquitination and subsequently promotes association with USP33.

It localises to the cytoplasm. It is found in the nucleus. Its subcellular location is the cell membrane. The protein resides in the membrane. The protein localises to the clathrin-coated pit. It localises to the cell projection. It is found in the pseudopodium. Its subcellular location is the cytoplasmic vesicle. Functionally, functions in regulating agonist-mediated G-protein coupled receptor (GPCR) signaling by mediating both receptor desensitization and resensitization processes. During homologous desensitization, beta-arrestins bind to the GPRK-phosphorylated receptor and sterically preclude its coupling to the cognate G-protein; the binding appears to require additional receptor determinants exposed only in the active receptor conformation. The beta-arrestins target many receptors for internalization by acting as endocytic adapters (CLASPs, clathrin-associated sorting proteins) and recruiting the GPRCs to the adapter protein 2 complex 2 (AP-2) in clathrin-coated pits (CCPs). However, the extent of beta-arrestin involvement appears to vary significantly depending on the receptor, agonist and cell type. Internalized arrestin-receptor complexes traffic to intracellular endosomes, where they remain uncoupled from G-proteins. Two different modes of arrestin-mediated internalization occur. Class A receptors, like ADRB2, OPRM1, ENDRA, D1AR and ADRA1B dissociate from beta-arrestin at or near the plasma membrane and undergo rapid recycling. Class B receptors, like AVPR2, AGTR1, NTSR1, TRHR and TACR1 internalize as a complex with arrestin and traffic with it to endosomal vesicles, presumably as desensitized receptors, for extended periods of time. Receptor resensitization then requires that receptor-bound arrestin is removed so that the receptor can be dephosphorylated and returned to the plasma membrane. Involved in internalization of P2RY4 and UTP-stimulated internalization of P2RY2. Involved in phosphorylation-dependent internalization of OPRD1 ands subsequent recycling. Involved in the degradation of cAMP by recruiting cAMP phosphodiesterases to ligand-activated receptors. Beta-arrestins function as multivalent adapter proteins that can switch the GPCR from a G-protein signaling mode that transmits short-lived signals from the plasma membrane via small molecule second messengers and ion channels to a beta-arrestin signaling mode that transmits a distinct set of signals that are initiated as the receptor internalizes and transits the intracellular compartment. Acts as a signaling scaffold for MAPK pathways such as MAPK1/3 (ERK1/2). ERK1/2 activated by the beta-arrestin scaffold is largely excluded from the nucleus and confined to cytoplasmic locations such as endocytic vesicles, also called beta-arrestin signalosomes. Recruits c-Src/SRC to ADRB2 resulting in ERK activation. GPCRs for which the beta-arrestin-mediated signaling relies on both ARRB1 and ARRB2 (codependent regulation) include ADRB2, F2RL1 and PTH1R. For some GPCRs the beta-arrestin-mediated signaling relies on either ARRB1 or ARRB2 and is inhibited by the other respective beta-arrestin form (reciprocal regulation). Inhibits ERK1/2 signaling in AGTR1- and AVPR2-mediated activation (reciprocal regulation). Is required for SP-stimulated endocytosis of NK1R and recruits c-Src/SRC to internalized NK1R resulting in ERK1/2 activation, which is required for the antiapoptotic effects of SP. Is involved in proteinase-activated F2RL1-mediated ERK activity. Acts as a signaling scaffold for the AKT1 pathway. Is involved in alpha-thrombin-stimulated AKT1 signaling. Is involved in IGF1-stimulated AKT1 signaling leading to increased protection from apoptosis. Involved in activation of the p38 MAPK signaling pathway and in actin bundle formation. Involved in F2RL1-mediated cytoskeletal rearrangement and chemotaxis. Involved in AGTR1-mediated stress fiber formation by acting together with GNAQ to activate RHOA. Appears to function as signaling scaffold involved in regulation of MIP-1-beta-stimulated CCR5-dependent chemotaxis. Involved in attenuation of NF-kappa-B-dependent transcription in response to GPCR or cytokine stimulation by interacting with and stabilizing CHUK. May serve as nuclear messenger for GPCRs. Involved in OPRD1-stimulated transcriptional regulation by translocating to CDKN1B and FOS promoter regions and recruiting EP300 resulting in acetylation of histone H4. Involved in regulation of LEF1 transcriptional activity via interaction with DVL1 and/or DVL2 Also involved in regulation of receptors other than GPCRs. Involved in Toll-like receptor and IL-1 receptor signaling through the interaction with TRAF6 which prevents TRAF6 autoubiquitination and oligomerization required for activation of NF-kappa-B and JUN. Binds phosphoinositides. Binds inositolhexakisphosphate (InsP6). Involved in IL8-mediated granule release in neutrophils. Required for atypical chemokine receptor ACKR2-induced RAC1-LIMK1-PAK1-dependent phosphorylation of cofilin (CFL1) and for the up-regulation of ACKR2 from endosomal compartment to cell membrane, increasing its efficiency in chemokine uptake and degradation. Involved in the internalization of the atypical chemokine receptor ACKR3. Negatively regulates the NOTCH signaling pathway by mediating the ubiquitination and degradation of NOTCH1 by ITCH. Participates in the recruitment of the ubiquitin-protein ligase to the receptor. This chain is Beta-arrestin-1 (ARRB1), found in Homo sapiens (Human).